The following is a 419-amino-acid chain: UDP-N-acetylglucosamine 1-carboxyvinyltransferase (419 aa).

Phosphoenolpyruvate is bound at residue Lys-23–Asn-24. Arg-92 provides a ligand contact to UDP-N-acetyl-alpha-D-glucosamine. Cys-116 (proton donor) is an active-site residue. Cys-116 bears the 2-(S-cysteinyl)pyruvic acid O-phosphothioketal mark. UDP-N-acetyl-alpha-D-glucosamine-binding positions include Arg-121–Leu-125, Lys-161–Val-164, Asp-306, and Ile-328.

Belongs to the EPSP synthase family. MurA subfamily.

Its subcellular location is the cytoplasm. The catalysed reaction is phosphoenolpyruvate + UDP-N-acetyl-alpha-D-glucosamine = UDP-N-acetyl-3-O-(1-carboxyvinyl)-alpha-D-glucosamine + phosphate. It participates in cell wall biogenesis; peptidoglycan biosynthesis. Its function is as follows. Cell wall formation. Adds enolpyruvyl to UDP-N-acetylglucosamine. In Vibrio cholerae serotype O1 (strain ATCC 39541 / Classical Ogawa 395 / O395), this protein is UDP-N-acetylglucosamine 1-carboxyvinyltransferase.